A 745-amino-acid chain; its full sequence is Pheromone-processing carboxypeptidase KEX1 (745 aa).

An N-terminal signal peptide occupies residues 1–47; it reads MSHFKYRNQTTDICNAAALDAFAMYSNYSVPLALLFALLLSFQTARA. At 48 to 655 the chain is on the lumenal side; that stretch reads LKAADEYAVS…DDDHNSGSHL (608 aa). Residues serine 214 and aspartate 418 contribute to the active site. Asparagine 471 and asparagine 479 each carry an N-linked (GlcNAc...) asparagine glycan. Histidine 482 is an active-site residue. Basic and acidic residues predominate over residues 515–526; sequence ITDDVNKGKDGD. The segment at 515-651 is disordered; the sequence is ITDDVNKGKD…AEDEDDDHNS (137 aa). Residues 527-537 show a composition bias toward acidic residues; that stretch reads ASETDDTTELD. The segment covering 538-549 has biased composition (basic and acidic residues); it reads CEGKDKLSEECK. Asparagine 552 is a glycosylation site (N-linked (GlcNAc...) asparagine). 2 stretches are compositionally biased toward acidic residues: residues 570 to 579 and 587 to 629; these read NEEDDNDDTE and DEKD…DDDK. Positions 630-640 are enriched in basic and acidic residues; sequence DGDKPEGKNND. A helical membrane pass occupies residues 656-676; that stretch reads AVTMICLLVSGTIIGGLYFTF. The Cytoplasmic segment spans residues 677-745; the sequence is RDRFRPRLRA…SRDSFELDNL (69 aa). Residues 709–745 are disordered; it reads EQDAADLSNPENGAKKKGPYTSVPTQESRDSFELDNL. Residues 735–745 show a composition bias toward basic and acidic residues; that stretch reads ESRDSFELDNL.

This sequence belongs to the peptidase S10 family.

It is found in the golgi apparatus. Its subcellular location is the trans-Golgi network membrane. It catalyses the reaction Preferential release of a C-terminal arginine or lysine residue.. Its function is as follows. Protease with a carboxypeptidase B-like function involved in the C-terminal processing of the lysine and arginine residues from protein precursors. Promotes cell fusion and is involved in the programmed cell death. This chain is Pheromone-processing carboxypeptidase KEX1 (KEX1), found in Lachancea thermotolerans (strain ATCC 56472 / CBS 6340 / NRRL Y-8284) (Yeast).